A 414-amino-acid chain; its full sequence is Zinc metalloproteinase-disintegrin-like batroxstatin-3 (414 aa).

Residues Asn7 and Asn70 are each glycosylated (N-linked (GlcNAc...) asparagine). The Peptidase M12B domain occupies 10–204 (KYIKLVIVAD…HTPQCILNEP (195 aa)). Cystine bridges form between Cys121/Cys199, Cys161/Cys183, and Cys163/Cys168. His146 is a binding site for Zn(2+). Residue Glu147 is part of the active site. Residues His150 and His156 each coordinate Zn(2+). The Disintegrin domain maps to 212 to 298 (PEVCGNYLLE…HCPTDRFHRN (87 aa)). Ca(2+)-binding residues include Val214, Asn217, Glu221, Glu224, and Asp227. Disulfide bonds link Cys215–Cys244, Cys226–Cys239, Cys228–Cys234, Cys238–Cys261, Cys252–Cys258, Cys257–Cys283, Cys270–Cys290, Cys277–Cys309, Cys302–Cys314, Cys321–Cys371, Cys336–Cys381, Cys349–Cys359, Cys366–Cys403, and Cys397–Cys408. The D/ECD-tripeptide signature appears at 276–278 (ECD). Residues Asp278, Glu281, Asp293, and Arg294 each contribute to the Ca(2+) site.

The protein belongs to the venom metalloproteinase (M12B) family. P-III subfamily. P-IIIa sub-subfamily. Monomer. It depends on Zn(2+) as a cofactor. Expressed by the venom gland.

The protein localises to the secreted. Its function is as follows. Snake venom zinc metalloprotease that induces apoptosis in vascular endothelial cells (VEC), without degrading the extracellular matrix (it cannot cleave collagen) or inhibiting adhesion of VEC. Has also fibrinogenolytic and hemorrhagic activities. The chain is Zinc metalloproteinase-disintegrin-like batroxstatin-3 from Bothrops atrox (Barba amarilla).